Here is a 539-residue protein sequence, read N- to C-terminus: G protein-coupled receptor associated sorting protein 3 (539 aa).

Residues 1 to 10 (MTGSKNKARA) are compositionally biased toward basic residues. Disordered stretches follow at residues 1-111 (MTGS…DSWF) and 132-170 (NSVA…EEEE). Basic and acidic residues-rich tracts occupy residues 66 to 80 (VVAE…ESKA) and 88 to 106 (FNHK…DKPS). Residues 132–146 (NSVAKCENKPSTSIQ) are compositionally biased toward polar residues.

Belongs to the GPRASP family. In terms of assembly, homodimer.

It is found in the cytoplasm. Its subcellular location is the nucleus. Functionally, survival and differentiation promoting protein that plays a role in the regulation of neurosynaptogenesis. Induces phosphatase PP2A activity which results in APP dephosphorylation and inhibits BACE1-mediated processing of APP. The polypeptide is G protein-coupled receptor associated sorting protein 3 (Gprasp3) (Rattus norvegicus (Rat)).